Reading from the N-terminus, the 257-residue chain is Phycoerythrobilin:ferredoxin oxidoreductase (257 aa).

It belongs to the HY2 family.

It catalyses the reaction (3Z)-phycoerythrobilin + oxidized 2[4Fe-4S]-[ferredoxin] = 15,16-dihydrobiliverdin + reduced 2[4Fe-4S]-[ferredoxin] + 2 H(+). Its function is as follows. Catalyzes the two-electron reduction of the C2 and C3(1) diene system of 15,16-dihydrobiliverdin. In Synechococcus sp. (strain CC9902), this protein is Phycoerythrobilin:ferredoxin oxidoreductase.